The following is a 434-amino-acid chain: Asparagine--tRNA ligase (434 aa).

It belongs to the class-II aminoacyl-tRNA synthetase family.

It is found in the cytoplasm. The enzyme catalyses tRNA(Asn) + L-asparagine + ATP = L-asparaginyl-tRNA(Asn) + AMP + diphosphate + H(+). This is Asparagine--tRNA ligase (asnS) from Pyrococcus furiosus (strain ATCC 43587 / DSM 3638 / JCM 8422 / Vc1).